A 37-amino-acid polypeptide reads, in one-letter code: Neuropeptide Y2-like conopeptide (37 aa).

At Tyr37 the chain carries Tyrosine amide.

Belongs to the NPY family. As to expression, expressed by the venom duct.

It localises to the secreted. In terms of biological role, causes hyperactivity such as jumping, rapid circling and tail flicking, after intraventicular injection into mouse brain. The polypeptide is Neuropeptide Y2-like conopeptide (Conus betulinus (Beech cone)).